Here is a 259-residue protein sequence, read N- to C-terminus: NAD kinase (259 aa).

The Proton acceptor role is filled by Asp-49. NAD(+) is bound by residues 49 to 50 (DG), Arg-54, 118 to 119 (NE), Asp-148, Ala-156, 159 to 164 (TAYNYS), and Ala-183.

It belongs to the NAD kinase family. A divalent metal cation is required as a cofactor.

It localises to the cytoplasm. The enzyme catalyses NAD(+) + ATP = ADP + NADP(+) + H(+). In terms of biological role, involved in the regulation of the intracellular balance of NAD and NADP, and is a key enzyme in the biosynthesis of NADP. Catalyzes specifically the phosphorylation on 2'-hydroxyl of the adenosine moiety of NAD to yield NADP. The protein is NAD kinase of Xylella fastidiosa (strain Temecula1 / ATCC 700964).